A 314-amino-acid chain; its full sequence is 3'-5' exoribonuclease YhaM (314 aa).

An HD domain is found at 163 to 279; that stretch reads HVVSMLDLAK…LHYIDNLDAK (117 aa).

The protein belongs to the YhaM family.

Functionally, shows a 3'-5' exoribonuclease activity. This Bacillus anthracis (strain CDC 684 / NRRL 3495) protein is 3'-5' exoribonuclease YhaM.